The chain runs to 620 residues: 1-deoxy-D-xylulose-5-phosphate synthase (620 aa).

Thiamine diphosphate contacts are provided by residues His80 and 121–123 (GHS). Residue Asp152 participates in Mg(2+) binding. Thiamine diphosphate-binding positions include 153–154 (GA), Asn181, Tyr288, and Glu370. Position 181 (Asn181) interacts with Mg(2+).

Belongs to the transketolase family. DXPS subfamily. In terms of assembly, homodimer. It depends on Mg(2+) as a cofactor. Thiamine diphosphate is required as a cofactor.

It carries out the reaction D-glyceraldehyde 3-phosphate + pyruvate + H(+) = 1-deoxy-D-xylulose 5-phosphate + CO2. The protein operates within metabolic intermediate biosynthesis; 1-deoxy-D-xylulose 5-phosphate biosynthesis; 1-deoxy-D-xylulose 5-phosphate from D-glyceraldehyde 3-phosphate and pyruvate: step 1/1. Its function is as follows. Catalyzes the acyloin condensation reaction between C atoms 2 and 3 of pyruvate and glyceraldehyde 3-phosphate to yield 1-deoxy-D-xylulose-5-phosphate (DXP). This chain is 1-deoxy-D-xylulose-5-phosphate synthase, found in Shigella flexneri.